The following is a 635-amino-acid chain: PTS system fructose-specific EIIABC component (635 aa).

Residues glutamate 5–histidine 149 enclose the PTS EIIA type-2 domain. Histidine 67 (tele-phosphohistidine intermediate; for EIIA activity) is an active-site residue. At histidine 67 the chain carries Phosphohistidine; by HPr. The disordered stretch occupies residues histidine 149–glycine 168. A compositionally biased stretch (acidic residues) spans aspartate 152–alanine 162. Residues isoleucine 172 to asparagine 267 form the PTS EIIB type-2 domain. The Phosphocysteine intermediate; for EIIB activity role is filled by cysteine 178. Cysteine 178 bears the Phosphocysteine; by EIIA mark. A disordered region spans residues tyrosine 273–serine 293. In terms of domain architecture, PTS EIIC type-2 spans phenylalanine 301–lysine 635. The next 9 membrane-spanning stretches (helical) occupy residues methionine 312–histidine 332, phenylalanine 350–methionine 370, asparagine 392–leucine 412, proline 428–valine 448, asparagine 470–leucine 490, alanine 511–phenylalanine 531, isoleucine 544–alanine 564, valine 569–valine 589, and methionine 608–valine 628.

The protein localises to the cell membrane. It carries out the reaction D-fructose(out) + N(pros)-phospho-L-histidyl-[protein] = D-fructose 1-phosphate(in) + L-histidyl-[protein]. The phosphoenolpyruvate-dependent sugar phosphotransferase system (sugar PTS), a major carbohydrate active transport system, catalyzes the phosphorylation of incoming sugar substrates concomitantly with their translocation across the cell membrane. This system is involved in fructose transport. This is PTS system fructose-specific EIIABC component (fruA) from Bacillus subtilis (strain 168).